A 318-amino-acid chain; its full sequence is Sensor histidine kinase NatK (318 aa).

3 helical membrane-spanning segments follow: residues 4–24 (LFQCLYLILFSFICYQGAAAF), 27–47 (STAASWLAAALGAAAAGLYIW), and 72–82 (VGVVLIGTDIM). Residues 132 to 318 (RNHDTMKHIT…RLEIKIPFQK (187 aa)) form the Histidine kinase domain. Residue His-134 is modified to Phosphohistidine; by autocatalysis.

The protein resides in the cell membrane. The catalysed reaction is ATP + protein L-histidine = ADP + protein N-phospho-L-histidine.. In terms of biological role, member of the two-component regulatory system NatK/NatR that positively regulates the expression of the natAB operon. Potentially phosphorylates NatR. The chain is Sensor histidine kinase NatK from Bacillus subtilis (strain 168).